Here is a 205-residue protein sequence, read N- to C-terminus: Holliday junction branch migration complex subunit RuvA (205 aa).

Positions 1 to 64 (MIGRLRGLLV…EDAQLLYGFI (64 aa)) are domain I. A domain II region spans residues 65–143 (TKQERALFRL…SLMEASAGSE (79 aa)). The segment at 144 to 156 (REFMLKSNYTPAP) is flexible linker. The segment at 157 to 205 (VINTAEEDAIAALLSLGYKPAQASKAVSAVYQDGMDSETLIKSSLKSML) is domain III.

This sequence belongs to the RuvA family. As to quaternary structure, homotetramer. Forms an RuvA(8)-RuvB(12)-Holliday junction (HJ) complex. HJ DNA is sandwiched between 2 RuvA tetramers; dsDNA enters through RuvA and exits via RuvB. An RuvB hexamer assembles on each DNA strand where it exits the tetramer. Each RuvB hexamer is contacted by two RuvA subunits (via domain III) on 2 adjacent RuvB subunits; this complex drives branch migration. In the full resolvosome a probable DNA-RuvA(4)-RuvB(12)-RuvC(2) complex forms which resolves the HJ.

It is found in the cytoplasm. In terms of biological role, the RuvA-RuvB-RuvC complex processes Holliday junction (HJ) DNA during genetic recombination and DNA repair, while the RuvA-RuvB complex plays an important role in the rescue of blocked DNA replication forks via replication fork reversal (RFR). RuvA specifically binds to HJ cruciform DNA, conferring on it an open structure. The RuvB hexamer acts as an ATP-dependent pump, pulling dsDNA into and through the RuvAB complex. HJ branch migration allows RuvC to scan DNA until it finds its consensus sequence, where it cleaves and resolves the cruciform DNA. The protein is Holliday junction branch migration complex subunit RuvA of Shewanella sediminis (strain HAW-EB3).